The following is a 287-amino-acid chain: MMKNILAIQSHVVYGHAGNSAAEFPMRRLGANVWPLNTVQFSNHTQYGKWTGCVMPPSHLTEIVQGIAAIDKLHTCDAVLSGYLGSAEQGEHILGIVRQVKAANPQAKYFCDPVMGHPEKGCIVAPGVAEFHVRHGLPASDIIAPNLVELEILCEHAVNNVEEAVLAARELIAQGPQIVLVKHLARAGYSRDRFEMLLVTADEAWHISRPLVDFGMRQPVGVGDVTSGLLLVKLLQGATLQEVLEHVTAAVYEIMVTTKAMQEYELQVVAAQDRIAKPEHYFSATKL.

Substrate-binding positions include serine 10 and 45-46 (TQ). Residues aspartate 112, alanine 144, glutamate 149, lysine 182, and 209-212 (RPLV) each bind ATP. Aspartate 224 is a substrate binding site.

The protein belongs to the pyridoxine kinase family. PdxY subfamily. Homodimer. Mg(2+) serves as cofactor.

The catalysed reaction is pyridoxal + ATP = pyridoxal 5'-phosphate + ADP + H(+). The protein operates within cofactor metabolism; pyridoxal 5'-phosphate salvage; pyridoxal 5'-phosphate from pyridoxal: step 1/1. Pyridoxal kinase involved in the salvage pathway of pyridoxal 5'-phosphate (PLP). Catalyzes the phosphorylation of pyridoxal to PLP. The protein is Pyridoxal kinase PdxY of Shigella sonnei (strain Ss046).